The sequence spans 394 residues: Phosphoglycerate kinase (394 aa).

Residues Asp21–Asn23, Arg36, His59–Arg62, Arg118, and Arg151 contribute to the substrate site. Ser183 is modified (phosphoserine). Residue Lys201 participates in ATP binding. At Thr299 the chain carries Phosphothreonine. ATP-binding positions include Glu323 and Gly350–Ser353.

Belongs to the phosphoglycerate kinase family. Monomer.

Its subcellular location is the cytoplasm. The catalysed reaction is (2R)-3-phosphoglycerate + ATP = (2R)-3-phospho-glyceroyl phosphate + ADP. Its pathway is carbohydrate degradation; glycolysis; pyruvate from D-glyceraldehyde 3-phosphate: step 2/5. The polypeptide is Phosphoglycerate kinase (Bacillus pumilus (strain SAFR-032)).